Here is a 215-residue protein sequence, read N- to C-terminus: YPESIDWRDKGAVTPVKNQNPCGSCWAFSTVATVEGINKIRTGKLISLSEQELLDCDRRSHGCKGGYQTGSIQYVADNGGVHTEKEYPYEKKQGKCRAKEKKGTKVQITGYKRVPANDEISLIQGIGNQPVSVLHESKGRAFQLYKGGIFNGPCGYKNDHAVTAIGYGKAQLLDKNSWGPNWGEKGYIKIKRASGKSEGTCGVYKSSYFPIKGYR.

3 disulfide bridges follow: cysteine 22-cysteine 63, cysteine 56-cysteine 96, and cysteine 154-cysteine 201. The active site involves cysteine 25. Catalysis depends on residues histidine 160 and asparagine 176.

Belongs to the peptidase C1 family.

Functionally, cysteine protease. In Jacaratia mexicana (Wild papaya), this protein is Chymomexicain.